The primary structure comprises 1217 residues: MIDVNKFESMQIGLASPNKIRSWSYGEVKKPETINYRTLKPEKDGLFDERIFGPTKDWSCACGKYKGVRYRGIVCDRCGVEVTSSKVRRERMGHIELAAPVTHIWYFKGIPSRMGLVLDISPRLLEEVIYFAAYIVIDPGDTDLEPKQLLTEAEYREQKAKYGNRFEAKMGAEAIRELLKKVDLDKEVKNLKKELQTATGQKRTRAIRRLDILDAFKNSGNKPEWMVMDAVPVIPPDLRPMVQLEGGRFATSDLNDLYRRVINRNNRLKRLLDLNAPNIIVQNEKRMLQEAVDALIDNGRRGRPVVGPGNRPLKSLSHMLKGKQGRFRQNLLGKRVDYSGRSVIDVSPKLKFYQCGVPRPMALELFKPFVMHELVKRGIASNIKNAKRKIDREDDDIWDVLEDVIKERPVLLNRAPTLHRLSIQAFEPVLVPGKSIRLHPLACEAYNADFDGDQMAIHVPLSDEAVAESRLLMLAAHHILAPKDGKPIVTPSQDVVLGNYWLTQAERGREGEGMIFSSPAEATVAYENGDIHYHTIIGMSADAMPKKPWPKGHEHGIFITTYGKLVFNQLFPDDYFYVNEPTEKNLNDPLDAKYFLNEGEDINSKINEVADDLIASPFKSSFLSDSIATIYKYYKVQRTSEYLDDLKELGYTSSTTSGITIGMNDVPEIGDKDEKVAKARKQVDVVSKQFRRGLITEQERHDRVISIWNACKDEIQNEIAQIHSPRNPISIMADSGARGNISNFTQLAGMRGLMATPNGGLFEIPVTSNFKEGLSVLELFMSTHGARKGMTDTALKTAQSGYLTRRLVDVAQDVIIRDDDCGTDRGITVSAIMEGDEMIEPLFDRLVGRFTAETVKDPETGEAIVGRDVMMDENMAHKICDAGVTHVKIRSILTCDTPHGVCRKCYGMNLATGEEVEVGEAVGTVAAQSIGEPGTQLTLRTFHNGGVAGAEDITQGLPRVQELFEARNPKGRATISEVDGVIDSIQENPAEHTREITVKGKIDTRSYSVPYTASVAVSEGDYVHRGDKLTLGSVDPKELIQVTDTLTTEKYILAEVQKAYRMQGVDIADKHVEVLTRQMLQKVRVLDPGETDILPGEVMDIGQFRDRNKEVIISGGIPATAQSIILSITKAALETNSFLSAASFQETTRVLTDASIRGKNDPLLGLKENVIIGKIIPAGTGMPIYRSMEPEADVKKPDSVYSIADIEKQMKEKDKTK.

Positions 60, 62, 75, and 78 each coordinate Zn(2+). 3 residues coordinate Mg(2+): D449, D451, and D453. Zn(2+)-binding residues include C821, C895, C902, and C905.

It belongs to the RNA polymerase beta' chain family. The RNAP catalytic core consists of 2 alpha, 1 beta, 1 beta' and 1 omega subunit. When a sigma factor is associated with the core the holoenzyme is formed, which can initiate transcription. Mg(2+) is required as a cofactor. It depends on Zn(2+) as a cofactor.

It carries out the reaction RNA(n) + a ribonucleoside 5'-triphosphate = RNA(n+1) + diphosphate. DNA-dependent RNA polymerase catalyzes the transcription of DNA into RNA using the four ribonucleoside triphosphates as substrates. This is DNA-directed RNA polymerase subunit beta' from Lactobacillus acidophilus (strain ATCC 700396 / NCK56 / N2 / NCFM).